An 875-amino-acid polypeptide reads, in one-letter code: Kelch-like protein 29 (875 aa).

Positions 115-126 (WGQTPINQSTPW) are enriched in polar residues. 2 disordered regions span residues 115–145 (WGQTPINQSTPWDTDEPPSKQMRESDNPGTG) and 248–291 (GPTA…DSAH). The span at 131-140 (PPSKQMRESD) shows a compositional bias: basic and acidic residues. Residues 329–401 (TDLKIVVEGR…VYTGSLVIDS (73 aa)) form the BTB domain. 6 Kelch repeats span residues 585–635 (VIVL…VSAG), 637–683 (NIYL…VYDG), 684–730 (KIYT…VCGG), 732–778 (IYVF…TLNG), 779–821 (FVFI…VLDG), and 822–870 (KIYA…VIKK).

The polypeptide is Kelch-like protein 29 (KLHL29) (Homo sapiens (Human)).